A 278-amino-acid polypeptide reads, in one-letter code: Ribosomal RNA small subunit methyltransferase A (278 aa).

Positions 27, 29, 54, 75, 95, and 118 each coordinate S-adenosyl-L-methionine.

It belongs to the class I-like SAM-binding methyltransferase superfamily. rRNA adenine N(6)-methyltransferase family. RsmA subfamily.

It localises to the cytoplasm. The enzyme catalyses adenosine(1518)/adenosine(1519) in 16S rRNA + 4 S-adenosyl-L-methionine = N(6)-dimethyladenosine(1518)/N(6)-dimethyladenosine(1519) in 16S rRNA + 4 S-adenosyl-L-homocysteine + 4 H(+). In terms of biological role, specifically dimethylates two adjacent adenosines (A1518 and A1519) in the loop of a conserved hairpin near the 3'-end of 16S rRNA in the 30S particle. May play a critical role in biogenesis of 30S subunits. The chain is Ribosomal RNA small subunit methyltransferase A from Chlamydia caviae (strain ATCC VR-813 / DSM 19441 / 03DC25 / GPIC) (Chlamydophila caviae).